Here is a 283-residue protein sequence, read N- to C-terminus: MPVITVYRHGGKGGVAPMNSSHIRTPRGEVQGWSPGAVRRNTEFLMSVREDQLTGAGLALTLTVRDCPPTAQEWQKIRRAWEARMRRAGMIRVHWVTEWQRRGVPHLHCAIWFSGTVYDVLLCVDAWLAVASSCGAGLRGQHGRIIDGVVGWFQYVSKHAARGVRHYQRCSENLPEGWKGLTGRVWGKGGYWPVSDALRIDLQDHRERGDGGYFAYRRLVRSWRVSDARSSGDRYRLRSARRMLTCSDTSRSRAIGFMEWVPLEVMLAFCANLAGRGYSVTSE.

The protein is Putative replication protein XF_b0001 of Xylella fastidiosa (strain 9a5c).